Consider the following 75-residue polypeptide: Large ribosomal subunit protein bL28c (75 aa).

The protein belongs to the bacterial ribosomal protein bL28 family.

It is found in the plastid. Its subcellular location is the chloroplast. In Cyanidioschyzon merolae (strain NIES-3377 / 10D) (Unicellular red alga), this protein is Large ribosomal subunit protein bL28c.